The chain runs to 561 residues: V-type proton ATPase catalytic subunit A (561 aa).

190–197 (GAFGCGKT) lines the ATP pocket.

The protein belongs to the ATPase alpha/beta chains family. In terms of assembly, V-ATPase is a heteromultimeric enzyme composed of a peripheral catalytic V1 complex (main components: subunits A, B, C, D, E, and F) attached to an integral membrane V0 proton pore complex (main component: the proteolipid protein). In terms of tissue distribution, high expression in the mesocotyl tip of etiolated seedlings compared to the base.

It catalyses the reaction ATP + H2O + 4 H(+)(in) = ADP + phosphate + 5 H(+)(out). In terms of biological role, catalytic subunit of the peripheral V1 complex of vacuolar ATPase. V-ATPase vacuolar ATPase is responsible for acidifying a variety of intracellular compartments in eukaryotic cells. The polypeptide is V-type proton ATPase catalytic subunit A (Zea mays (Maize)).